The primary structure comprises 506 residues: Maturase K (506 aa).

It belongs to the intron maturase 2 family. MatK subfamily.

The protein localises to the plastid. The protein resides in the chloroplast. Functionally, usually encoded in the trnK tRNA gene intron. Probably assists in splicing its own and other chloroplast group II introns. The chain is Maturase K from Lactuca sativa (Garden lettuce).